Here is a 505-residue protein sequence, read N- to C-terminus: Lysine--tRNA ligase, heat inducible (505 aa).

Residues Lys-114 and Lys-156 each carry the N6-acetyllysine modification. Residues Glu-415 and Glu-422 each coordinate Mg(2+).

It belongs to the class-II aminoacyl-tRNA synthetase family. Homodimer. Mg(2+) is required as a cofactor.

It is found in the cytoplasm. The enzyme catalyses tRNA(Lys) + L-lysine + ATP = L-lysyl-tRNA(Lys) + AMP + diphosphate. The chain is Lysine--tRNA ligase, heat inducible (lysU) from Escherichia coli O6:H1 (strain CFT073 / ATCC 700928 / UPEC).